The following is a 168-amino-acid chain: Gastrula zinc finger protein XlCGF42.1 (168 aa).

6 consecutive C2H2-type zinc fingers follow at residues 6–28, 34–56, 62–84, 90–112, 118–140, and 146–165; these read YSCS…RKSH, FCCS…YRTH, CICS…QKYH, FSCS…LRIH, YTCT…LRIH, and FTCS…DRHH.

Belongs to the krueppel C2H2-type zinc-finger protein family.

Its subcellular location is the nucleus. Its function is as follows. May be involved in transcriptional regulation. This is Gastrula zinc finger protein XlCGF42.1 from Xenopus laevis (African clawed frog).